Reading from the N-terminus, the 367-residue chain is Anhydro-N-acetylmuramic acid kinase (367 aa).

Position 11–18 (11–18) interacts with ATP; sequence GTSLDGVD.

It belongs to the anhydro-N-acetylmuramic acid kinase family.

The enzyme catalyses 1,6-anhydro-N-acetyl-beta-muramate + ATP + H2O = N-acetyl-D-muramate 6-phosphate + ADP + H(+). Its pathway is amino-sugar metabolism; 1,6-anhydro-N-acetylmuramate degradation. It functions in the pathway cell wall biogenesis; peptidoglycan recycling. Its function is as follows. Catalyzes the specific phosphorylation of 1,6-anhydro-N-acetylmuramic acid (anhMurNAc) with the simultaneous cleavage of the 1,6-anhydro ring, generating MurNAc-6-P. Is required for the utilization of anhMurNAc either imported from the medium or derived from its own cell wall murein, and thus plays a role in cell wall recycling. In Rhodopseudomonas palustris (strain HaA2), this protein is Anhydro-N-acetylmuramic acid kinase.